The chain runs to 293 residues: Carbapenem-hydrolyzing beta-lactamase KPC (293 aa).

Positions 1–24 (MSLYRRLVLLSCLSWPLAGFSATA) are cleaved as a signal peptide. Catalysis depends on Ser69, which acts as the Acyl-ester intermediate. Catalysis depends on Glu167, which acts as the Proton acceptor. Residue 233–235 (KTG) coordinates substrate.

It belongs to the class-A beta-lactamase family.

The catalysed reaction is a beta-lactam + H2O = a substituted beta-amino acid. With respect to regulation, not inhibited by EDTA, inhibited by clavulanic acid and tazobactam. In terms of biological role, hydrolyzes carbapenems, penicillins, cephalosporins and aztreonam with varying efficiency. In Klebsiella oxytoca, this protein is Carbapenem-hydrolyzing beta-lactamase KPC (bla).